A 583-amino-acid chain; its full sequence is NudC domain-containing protein 1 (583 aa).

Ser-8 bears the Phosphoserine mark. In terms of domain architecture, CS spans 273–361 (IKEPLYYWQQ…NEGLTWPELV (89 aa)). Ser-388 is subject to Phosphoserine.

As to expression, isoform 1 is specifically expressed in leukemias and a variety of solid tumor cell lines and is also detected in testis and heart. Isoform 2 is predominantly expressed in testis and weakly expressed in tumor cells.

It localises to the cytoplasm. It is found in the nucleus. The sequence is that of NudC domain-containing protein 1 from Homo sapiens (Human).